Consider the following 90-residue polypeptide: Probable small nuclear ribonucleoprotein E (90 aa).

In terms of domain architecture, Sm spans 14–89; that stretch reads VNLIFRYLQN…ITLIHAAAQE (76 aa).

The protein belongs to the snRNP Sm proteins family. As to quaternary structure, core component of the spliceosomal U1, U2, U4 and U5 small nuclear ribonucleoproteins (snRNPs), the building blocks of the spliceosome.

Its subcellular location is the nucleus. The protein resides in the cytoplasm. It is found in the cytosol. Functionally, plays a role in pre-mRNA splicing as a core component of the spliceosomal U1, U2, U4 and U5 small nuclear ribonucleoproteins (snRNPs), the building blocks of the spliceosome. The protein is Probable small nuclear ribonucleoprotein E (snr-6) of Caenorhabditis briggsae.